A 267-amino-acid polypeptide reads, in one-letter code: Regulatory protein VirG (267 aa).

The Response regulatory domain maps to 29–143 (HVLLVDDDVA…EFLARIRVAL (115 aa)). 4-aspartylphosphate is present on D78. A DNA-binding region (ompR/PhoB-type) is located at residues 155–255 (RRSFCFTDWT…ARGAGYFFDA (101 aa)).

In terms of processing, phosphorylated by wide host range (WHR) VirA protein.

It is found in the cytoplasm. Its function is as follows. VirG is required for the positive regulation of at least two vir loci encoded by the Ti plasmid of A.tumefaciens. The sequence is that of Regulatory protein VirG (virG) from Agrobacterium tumefaciens (strain 15955).